Reading from the N-terminus, the 436-residue chain is Ribulose bisphosphate carboxylase large chain (436 aa).

Substrate contacts are provided by N104 and T154. K156 serves as the catalytic Proton acceptor. Position 158 (K158) interacts with substrate. The Mg(2+) site is built by K182, D184, and E185. K182 carries the N6-carboxylysine modification. Residue H275 is the Proton acceptor of the active site. Substrate is bound by residues R276, H308, and S360.

It belongs to the RuBisCO large chain family. Type I subfamily. As to quaternary structure, heterohexadecamer of 8 large chains and 8 small chains; disulfide-linked. The disulfide link is formed within the large subunit homodimers. Requires Mg(2+) as cofactor. Post-translationally, the disulfide bond which can form in the large chain dimeric partners within the hexadecamer appears to be associated with oxidative stress and protein turnover.

The protein resides in the plastid. It localises to the chloroplast. It catalyses the reaction 2 (2R)-3-phosphoglycerate + 2 H(+) = D-ribulose 1,5-bisphosphate + CO2 + H2O. The catalysed reaction is D-ribulose 1,5-bisphosphate + O2 = 2-phosphoglycolate + (2R)-3-phosphoglycerate + 2 H(+). Functionally, ruBisCO catalyzes two reactions: the carboxylation of D-ribulose 1,5-bisphosphate, the primary event in carbon dioxide fixation, as well as the oxidative fragmentation of the pentose substrate in the photorespiration process. Both reactions occur simultaneously and in competition at the same active site. The polypeptide is Ribulose bisphosphate carboxylase large chain (Euglena geniculata).